The primary structure comprises 79 residues: Dolichyl-diphosphooligosaccharide--protein glycosyltransferase subunit TMEM258 (79 aa).

Helical transmembrane passes span 17–37 (VFPHLTVVLLAIGMFFKAWFF) and 59–79 (VASLFMGFGVHFLLLWVGIFV).

This sequence belongs to the OST5 family. In terms of assembly, component of the oligosaccharyltransferase (OST) complex.

It localises to the membrane. The protein resides in the endoplasmic reticulum. Its subcellular location is the cytoplasm. It participates in protein modification; protein glycosylation. In terms of biological role, subunit of the oligosaccharyl transferase (OST) complex that catalyzes the initial transfer of a defined glycan (Glc(3)Man(9)GlcNAc(2) in eukaryotes) from the lipid carrier dolichol-pyrophosphate to an asparagine residue within an Asn-X-Ser/Thr consensus motif in nascent polypeptide chains, the first step in protein N-glycosylation. N-glycosylation occurs cotranslationally and the complex associates with the Sec61 complex at the channel-forming translocon complex that mediates protein translocation across the endoplasmic reticulum (ER). All subunits are required for a maximal enzyme activity. In Danio rerio (Zebrafish), this protein is Dolichyl-diphosphooligosaccharide--protein glycosyltransferase subunit TMEM258.